The sequence spans 199 residues: MISGHNCLQVGQIAPDFSATAVYDQEFKTIKLSDFKNKYVILFFYPLDFTFVCPTEITAFSDKYSDFSELNTEILGVSVDSEYSHLAWLQTDRESGGLGDLEYPLVSDLKKEISIAYNVLNSGGVALRGLFIIDPKGIIQYSTVNNLEFGRSVEETLRVLQAIQYVQAHPDEVCPANWKPGDRTMNPDPIKSKNYFAAA.

The 158-residue stretch at 8-165 folds into the Thioredoxin domain; it reads LQVGQIAPDF…TLRVLQAIQY (158 aa). Catalysis depends on Cys-53, which acts as the Cysteine sulfenic acid (-SOH) intermediate.

The protein belongs to the peroxiredoxin family. AhpC/Prx1 subfamily. Homodimer; disulfide-linked, upon oxidation. The Cys-53-SH group is the primary site of oxidation by H(2)O(2), and the oxidized Cys-53 (probably Cys-SOH) rapidly reacts with Cys-174-SH of the other subunit to form an intermolecular disulfide. This disulfide is subsequently reduced by thioredoxin.

The protein localises to the plastid. The protein resides in the chloroplast. It catalyses the reaction a hydroperoxide + [thioredoxin]-dithiol = an alcohol + [thioredoxin]-disulfide + H2O. Functionally, thiol-specific peroxidase that catalyzes the reduction of hydrogen peroxide and organic hydroperoxides to water and alcohols, respectively. Plays a role in cell protection against oxidative stress by detoxifying peroxides. The polypeptide is Putative peroxiredoxin ycf42 (ycf42) (Porphyra purpurea (Red seaweed)).